Consider the following 286-residue polypeptide: 4-diphosphocytidyl-2-C-methyl-D-erythritol kinase (286 aa).

The active site involves Lys10. 94 to 104 (PVAAGLAGGSS) contacts ATP. Residue Asp136 is part of the active site.

It belongs to the GHMP kinase family. IspE subfamily.

The catalysed reaction is 4-CDP-2-C-methyl-D-erythritol + ATP = 4-CDP-2-C-methyl-D-erythritol 2-phosphate + ADP + H(+). It participates in isoprenoid biosynthesis; isopentenyl diphosphate biosynthesis via DXP pathway; isopentenyl diphosphate from 1-deoxy-D-xylulose 5-phosphate: step 3/6. Functionally, catalyzes the phosphorylation of the position 2 hydroxy group of 4-diphosphocytidyl-2C-methyl-D-erythritol. This chain is 4-diphosphocytidyl-2-C-methyl-D-erythritol kinase, found in Exiguobacterium sibiricum (strain DSM 17290 / CCUG 55495 / CIP 109462 / JCM 13490 / 255-15).